A 103-amino-acid chain; its full sequence is Small ribosomal subunit protein uS10 (103 aa).

The protein belongs to the universal ribosomal protein uS10 family. As to quaternary structure, part of the 30S ribosomal subunit.

In terms of biological role, involved in the binding of tRNA to the ribosomes. This Chlorobium luteolum (strain DSM 273 / BCRC 81028 / 2530) (Pelodictyon luteolum) protein is Small ribosomal subunit protein uS10.